We begin with the raw amino-acid sequence, 283 residues long: Elongation factor Ts (283 aa).

An involved in Mg(2+) ion dislocation from EF-Tu region spans residues 80 to 83 (TDFV).

Belongs to the EF-Ts family.

It localises to the cytoplasm. Its function is as follows. Associates with the EF-Tu.GDP complex and induces the exchange of GDP to GTP. It remains bound to the aminoacyl-tRNA.EF-Tu.GTP complex up to the GTP hydrolysis stage on the ribosome. The chain is Elongation factor Ts from Haemophilus influenzae (strain PittEE).